A 353-amino-acid chain; its full sequence is Ribosomal RNA small subunit methyltransferase H (353 aa).

S-adenosyl-L-methionine is bound by residues 50–52 (GGY), Asp69, Phe96, Asp117, and Gln124. Positions 276 to 353 (AAQASRHVPG…PAPQGRGPRR (78 aa)) are disordered.

Belongs to the methyltransferase superfamily. RsmH family.

Its subcellular location is the cytoplasm. The catalysed reaction is cytidine(1402) in 16S rRNA + S-adenosyl-L-methionine = N(4)-methylcytidine(1402) in 16S rRNA + S-adenosyl-L-homocysteine + H(+). Specifically methylates the N4 position of cytidine in position 1402 (C1402) of 16S rRNA. This chain is Ribosomal RNA small subunit methyltransferase H, found in Methylorubrum extorquens (strain CM4 / NCIMB 13688) (Methylobacterium extorquens).